A 400-amino-acid chain; its full sequence is General L-amino acid transport system permease protein AapQ (400 aa).

Helical transmembrane passes span 29-49 (SIFYQILTIVILVGFVWWVAH), 100-120 (LLVAVTGIFTATIIGFLIGIG), 142-162 (IPPLLVIFFWYLGVLSVLPQP), 188-208 (TGMIAVGIALVIAIVASIIIA), 225-245 (VWTAIALIVGLPLLVFVVSGF), 264-284 (VVGPEFMSLFLALSFYTASFI), 340-360 (NSSLAIAIGFSDLVAVGGTIL), and 367-387 (IEIVCIWGIVYLSLSILTSLF). The region spanning 96-388 (ILNTLLVAVT…SLSILTSLFM (293 aa)) is the ABC transmembrane type-1 domain.

It belongs to the binding-protein-dependent transport system permease family. HisMQ subfamily.

It localises to the cell inner membrane. Functionally, part of a binding-protein-dependent transport system for L-amino acids, affects the uptake as well as efflux of these amino acids. Probably responsible for the translocation of the substrate across the membrane. This is General L-amino acid transport system permease protein AapQ (aapQ) from Rhizobium johnstonii (strain DSM 114642 / LMG 32736 / 3841) (Rhizobium leguminosarum bv. viciae).